The sequence spans 242 residues: Transcriptional activator protein RaiR (242 aa).

Residues 177-242 (KVADLPRLSR…EQLLGPRRSN (66 aa)) enclose the HTH luxR-type domain. A DNA-binding region (H-T-H motif) is located at residues 201–220 (AKQICARLSISVSAVQLYLA).

This sequence belongs to the autoinducer-regulated transcriptional regulatory protein family.

This Rhizobium etli protein is Transcriptional activator protein RaiR (raiR).